Reading from the N-terminus, the 203-residue chain is FMN-dependent NADH:quinone oxidoreductase (203 aa).

Residues serine 9, 15–17, and 139–142 each bind FMN; these read SVS and TRGG.

This sequence belongs to the azoreductase type 1 family. As to quaternary structure, homodimer. FMN is required as a cofactor.

The catalysed reaction is 2 a quinone + NADH + H(+) = 2 a 1,4-benzosemiquinone + NAD(+). It carries out the reaction N,N-dimethyl-1,4-phenylenediamine + anthranilate + 2 NAD(+) = 2-(4-dimethylaminophenyl)diazenylbenzoate + 2 NADH + 2 H(+). Its function is as follows. Quinone reductase that provides resistance to thiol-specific stress caused by electrophilic quinones. Also exhibits azoreductase activity. Catalyzes the reductive cleavage of the azo bond in aromatic azo compounds to the corresponding amines. The protein is FMN-dependent NADH:quinone oxidoreductase of Albidiferax ferrireducens (strain ATCC BAA-621 / DSM 15236 / T118) (Rhodoferax ferrireducens).